Here is a 357-residue protein sequence, read N- to C-terminus: Histidinol-phosphate aminotransferase 1 (357 aa).

Lysine 217 bears the N6-(pyridoxal phosphate)lysine mark.

The protein belongs to the class-II pyridoxal-phosphate-dependent aminotransferase family. Histidinol-phosphate aminotransferase subfamily. In terms of assembly, homodimer. It depends on pyridoxal 5'-phosphate as a cofactor.

It carries out the reaction L-histidinol phosphate + 2-oxoglutarate = 3-(imidazol-4-yl)-2-oxopropyl phosphate + L-glutamate. Its pathway is amino-acid biosynthesis; L-histidine biosynthesis; L-histidine from 5-phospho-alpha-D-ribose 1-diphosphate: step 7/9. The chain is Histidinol-phosphate aminotransferase 1 from Burkholderia lata (strain ATCC 17760 / DSM 23089 / LMG 22485 / NCIMB 9086 / R18194 / 383).